A 642-amino-acid polypeptide reads, in one-letter code: MPVITLPDGSQRHFDHAVSPMDVALDIGPGLAKATIAGRVNGELVDACDPIETDSTLSIITAKDEEGLEIIRHSCAHLLGHAIKQLWPNTKMAIGPVVDNGFYYDVDLDHTLTQEDIDALEKRMHELAEKNYDVIKKKVSWHEARETFVKRGETYKVSILDENIAHDDKPGLYHHEEYIDMCRGPHVPNMRFCHHFKLMKTAGAYWRGDSNNKMLQRIYGTAWADKKALNAYLQRLEEAAKRDHRKIGKQLDLYHMQEEAPGMVFWHNDGWTIFRELETFVRSKLKEYQYQEVKGPFMMDRVLWEKTGHWDNYKDAMFTTSSENREYCIKPMNCPGHVQIFNQGLKSYRDLPLRMAEFGSCHRNEPSGALHGLMRVRGFTQDDAHIFCTEDQVRDEVNACIRMVYDMYSTFGFEKIVVKLSTRPEKRIGSDETWDRAEADLAVALEENNIPFEYQLGEGAFYGPKIEFTLYDCLDRAWQCGTVQLDFSLPQRLSASYVGENNERQVPVMIHRAILGSLERFIGILTEEFAGFFPTWIAPVQVVVMNITDSQAEYVNELTRKLQNAGIRVKADLRNEKIGFKIREHTLRRVPYMLVCGDKEVEAGKVAVRTRRGKDLGSMDVSEVIEKLQQEIRSRSLQQLEE.

A TGS domain is found at 1–61 (MPVITLPDGS…ETDSTLSIIT (61 aa)). The interval 243-534 (DHRKIGKQLD…LTEEFAGFFP (292 aa)) is catalytic. Cys334, His385, and His511 together coordinate Zn(2+).

It belongs to the class-II aminoacyl-tRNA synthetase family. As to quaternary structure, homodimer. Zn(2+) serves as cofactor.

It localises to the cytoplasm. It carries out the reaction tRNA(Thr) + L-threonine + ATP = L-threonyl-tRNA(Thr) + AMP + diphosphate + H(+). In terms of biological role, catalyzes the attachment of threonine to tRNA(Thr) in a two-step reaction: L-threonine is first activated by ATP to form Thr-AMP and then transferred to the acceptor end of tRNA(Thr). Also edits incorrectly charged L-seryl-tRNA(Thr). This Klebsiella pneumoniae (strain 342) protein is Threonine--tRNA ligase.